The following is a 323-amino-acid chain: Acetyl esterase (323 aa).

The Involved in the stabilization of the negatively charged intermediate by the formation of the oxyanion hole motif lies at 91–93 (HGG). Residues serine 165, aspartate 262, and histidine 292 contribute to the active site.

Belongs to the 'GDXG' lipolytic enzyme family. As to quaternary structure, homodimer. Interacts with MalT and MelA.

Its subcellular location is the cytoplasm. Its function is as follows. Displays esterase activity towards short chain fatty esters (acyl chain length of up to 8 carbons). Able to hydrolyze triacetylglycerol (triacetin) and tributyrylglycerol (tributyrin), but not trioleylglycerol (triolein) or cholesterol oleate. Negatively regulates MalT activity by antagonizing maltotriose binding. Inhibits MelA galactosidase activity. The sequence is that of Acetyl esterase from Salmonella schwarzengrund (strain CVM19633).